A 564-amino-acid chain; its full sequence is Ubiquitin carboxyl-terminal hydrolase 39 (564 aa).

The disordered stretch occupies residues 1 to 96 (MSSRSKRQSH…VRAKNGRVDS (96 aa)). Residues 28–39 (IKKERDREKEPE) show a composition bias toward basic and acidic residues. A Phosphoserine modification is found at Ser46. Lys51 participates in a covalent cross-link: Glycyl lysine isopeptide (Lys-Gly) (interchain with G-Cter in SUMO2). The segment covering 59–69 (REVPAPALPVV) has biased composition (low complexity). Position 81 is a phosphoserine (Ser81). A compositionally biased stretch (basic and acidic residues) spans 84–96 (EREVRAKNGRVDS). The UBP-type; degenerate zinc finger occupies 102–199 (RHCPYLDTIN…YVLKPTFTKQ (98 aa)). Zn(2+)-binding residues include Cys135, Cys138, His154, and His160. Positions 224-554 (VGLNNIKAND…EAYIQIWKRR (331 aa)) constitute a USP domain.

The protein belongs to the peptidase C19 family. The U4/U6-U5 tri-snRNP complex is a building block of the precatalytic spliceosome (spliceosome B complex). Component of the U4/U6-U5 tri-snRNP complex composed of the U4, U6 and U5 snRNAs and at least PRPF3, PRPF4, PRPF6, PRPF8, PRPF31, SNRNP200, TXNL4A, SNRNP40, SNRPB, SNRPD1, SNRPD2, SNRPD3, SNRPE, SNRPF, SNRPG, DDX23, CD2BP2, PPIH, SNU13, EFTUD2, SART1 and USP39, plus LSM2, LSM3, LSM4, LSM5, LSM6, LSM7 and LSM8.

The protein localises to the nucleus. It carries out the reaction Thiol-dependent hydrolysis of ester, thioester, amide, peptide and isopeptide bonds formed by the C-terminal Gly of ubiquitin (a 76-residue protein attached to proteins as an intracellular targeting signal).. Deubiquitinating enzyme that plays a role in many cellular processes including cellular antiviral response, epithelial morphogenesis, DNA repair or B-cell development. Plays a role in pre-mRNA splicing as a component of the U4/U6-U5 tri-snRNP, one of the building blocks of the precatalytic spliceosome. Specifically regulates immunoglobulin gene rearrangement in a spliceosome-dependent manner, which involves modulating chromatin interactions at the Igh locus and therefore plays an essential role in B-cell development. Regulates AURKB mRNA levels, and thereby plays a role in cytokinesis and in the spindle checkpoint. Regulates apoptosis and G2/M cell cycle checkpoint in response to DNA damage by deubiquitinating and stabilizing CHK2. Also plays an important role in DNA repair by controlling the recruitment of XRCC4/LIG4 to DNA double-strand breaks for non-homologous end-joining repair. Participates in antiviral activity by affecting the type I IFN signaling by stabilizing STAT1 and decreasing its 'Lys-6'-linked ubiquitination. Contributes to non-canonical Wnt signaling during epidermal differentiation. Acts as a negative regulator NF-kappa-B activation through deubiquitination of 'Lys-48'-linked ubiquitination of NFKBIA. In Mus musculus (Mouse), this protein is Ubiquitin carboxyl-terminal hydrolase 39.